Reading from the N-terminus, the 430-residue chain is Delta-aminolevulinic acid dehydratase 1, chloroplastic (430 aa).

The transit peptide at Met1–Arg52 directs the protein to the chloroplast. Residues Glu82–Ala91 show a composition bias toward pro residues. Positions Glu82–Pro101 are disordered. Catalysis depends on Lys298, which acts as the Schiff-base intermediate with substrate. 2 residues coordinate 5-aminolevulinate: Arg308 and Lys320. Mg(2+) is bound at residue Glu336. Lys351 functions as the Schiff-base intermediate with substrate in the catalytic mechanism. 5-aminolevulinate contacts are provided by Ser377 and Tyr416.

The protein belongs to the ALAD family. In terms of assembly, homooctamer. Mg(2+) is required as a cofactor. Highly expressed in cotyledons during dark-to-light transition.

Its subcellular location is the plastid. It is found in the chloroplast. The catalysed reaction is 2 5-aminolevulinate = porphobilinogen + 2 H2O + H(+). The protein operates within porphyrin-containing compound metabolism; protoporphyrin-IX biosynthesis; coproporphyrinogen-III from 5-aminolevulinate: step 1/4. It participates in porphyrin-containing compound metabolism; chlorophyll biosynthesis. Its function is as follows. Catalyzes an early step in the biosynthesis of tetrapyrroles. Binds two molecules of 5-aminolevulinate per subunit, each at a distinct site, and catalyzes their condensation to form porphobilinogen. In Arabidopsis thaliana (Mouse-ear cress), this protein is Delta-aminolevulinic acid dehydratase 1, chloroplastic (HEMB1).